Reading from the N-terminus, the 345-residue chain is UDP-3-O-acylglucosamine N-acyltransferase (345 aa).

Histidine 248 acts as the Proton acceptor in catalysis.

The protein belongs to the transferase hexapeptide repeat family. LpxD subfamily. As to quaternary structure, homotrimer.

The enzyme catalyses a UDP-3-O-[(3R)-3-hydroxyacyl]-alpha-D-glucosamine + a (3R)-hydroxyacyl-[ACP] = a UDP-2-N,3-O-bis[(3R)-3-hydroxyacyl]-alpha-D-glucosamine + holo-[ACP] + H(+). Its pathway is bacterial outer membrane biogenesis; LPS lipid A biosynthesis. Catalyzes the N-acylation of UDP-3-O-acylglucosamine using 3-hydroxyacyl-ACP as the acyl donor. Is involved in the biosynthesis of lipid A, a phosphorylated glycolipid that anchors the lipopolysaccharide to the outer membrane of the cell. This is UDP-3-O-acylglucosamine N-acyltransferase from Prochlorococcus marinus (strain SARG / CCMP1375 / SS120).